The chain runs to 177 residues: Nucleoside triphosphate/diphosphate phosphatase (177 aa).

Arg23 serves as the catalytic Proton donor. 6 residues coordinate Mg(2+): Asn87, Asp103, Asp105, Asp107, Asp120, and Glu123.

It belongs to the Ntdp family. The cofactor is Mg(2+).

It catalyses the reaction a ribonucleoside 5'-triphosphate + H2O = a ribonucleoside 5'-diphosphate + phosphate + H(+). It carries out the reaction a ribonucleoside 5'-diphosphate + H2O = a ribonucleoside 5'-phosphate + phosphate + H(+). Has nucleoside phosphatase activity towards nucleoside triphosphates and nucleoside diphosphates. This Streptococcus thermophilus (strain CNRZ 1066) protein is Nucleoside triphosphate/diphosphate phosphatase.